The sequence spans 198 residues: uncharacterized protein (198 aa).

Residues 40–111 (GSALPPQAPT…LSRGAGQGAP (72 aa)) form a disordered region. The segment covering 60-74 (SSRTPGPRPPRSTLR) has biased composition (low complexity).

This is an uncharacterized protein from Homo sapiens (Human).